A 706-amino-acid chain; its full sequence is Transcription factor 12 (706 aa).

The segment at 25–109 is disordered; that stretch reads AMFSPPVNSG…TPFMNSNLIG (85 aa). Composition is skewed to polar residues over residues 30-48 and 56-76; these read PVNS…QFSG and GTTS…SRGF. Phosphoserine is present on residues S47, S67, and S79. Over residues 81 to 93 the composition is skewed to basic and acidic residues; that stretch reads HYSDHLNDSRLGT. The residue at position 98 (S98) is a Phosphoserine. K110 is covalently cross-linked (Glycyl lysine isopeptide (Lys-Gly) (interchain with G-Cter in SUMO2)). Phosphoserine occurs at positions 116 and 124. The tract at residues 119-140 is leucine-zipper; it reads LYSRDSGLSGCQSSLLRQDLGL. Disordered stretches follow at residues 140–222 and 249–313; these read LGSP…SMFA and FGGI…ASHT. Polar residues predominate over residues 144-163; sequence AQLSSSGKPGTPYYSFSATS. K181 is covalently cross-linked (Glycyl lysine isopeptide (Lys-Gly) (interchain with G-Cter in SUMO2)). Residues 181 to 188 carry the Nuclear localization signal motif; that stretch reads KKVRKVPP. Low complexity predominate over residues 256–269; the sequence is STSHMSQSSSYGSL. Polar residues predominate over residues 282 to 306; that stretch reads VSPTDINTSLPPMSSFHRGSTSSSP. T313 carries the post-translational modification Phosphothreonine. At S333 the chain carries Phosphoserine. Disordered regions lie at residues 349–392 and 520–604; these read PDHT…YENS and HKTP…ERRM. The span at 352-363 shows a compositional bias: low complexity; that stretch reads TSSSFPSNPSTP. 2 stretches are compositionally biased toward polar residues: residues 364-376 and 383-392; these read VGSP…TSQW and APSSPSYENS. S392 carries the phosphoserine modification. Composition is skewed to basic and acidic residues over residues 542–554 and 560–575; these read IKTE…ENLH and DDMK…DIKV. K543 participates in a covalent cross-link: Glycyl lysine isopeptide (Lys-Gly) (interchain with G-Cter in SUMO2). S564 carries the phosphoserine modification. K574 participates in a covalent cross-link: Glycyl lysine isopeptide (Lys-Gly) (interchain with G-Cter in SUMO2). The residue at position 581 (T581) is a Phosphothreonine. Phosphoserine occurs at positions 582 and 583. A compositionally biased stretch (basic and acidic residues) spans 592–604; the sequence is PEQKIEREKERRM. Residues 601 to 654 enclose the bHLH domain; sequence ERRMANNARERLRVRDINEAFKELGRMCQLHLKSEKPQTKLLILHQAVAVILSL. Residues K633 and K677 each participate in a glycyl lysine isopeptide (Lys-Gly) (interchain with G-Cter in SUMO2) cross-link. The class A specific domain stretch occupies residues 656–679; it reads QQVRERNLNPKAACLKRREEEKVS. The segment at 674–706 is disordered; that stretch reads EEEKVSAASAEPPNTLPGAHPGLSESTNPMGHL. Residues 697 to 706 are compositionally biased toward polar residues; it reads SESTNPMGHL.

As to quaternary structure, efficient DNA binding requires dimerization with another bHLH protein. Forms homo- or heterooligomers with myogenin, E12 and ITF2 proteins and RUNX1T1. Interacts with PTF1A. Interacts with NEUROD2. Interacts with BHLHA9. Widely expressed.

It localises to the nucleus. In terms of biological role, transcriptional regulator. Involved in the initiation of neuronal differentiation. Activates transcription by binding to the E box (5'-CANNTG-3'). May be involved in the functional network that regulates the development of the GnRH axis. This chain is Transcription factor 12 (Tcf12), found in Mus musculus (Mouse).